A 140-amino-acid polypeptide reads, in one-letter code: Nucleoside diphosphate kinase (140 aa).

Residues lysine 11, phenylalanine 59, arginine 87, threonine 93, arginine 104, and asparagine 114 each contribute to the ATP site. The Pros-phosphohistidine intermediate role is filled by histidine 117.

It belongs to the NDK family. As to quaternary structure, homotetramer. Requires Mg(2+) as cofactor.

It is found in the cytoplasm. It carries out the reaction a 2'-deoxyribonucleoside 5'-diphosphate + ATP = a 2'-deoxyribonucleoside 5'-triphosphate + ADP. The enzyme catalyses a ribonucleoside 5'-diphosphate + ATP = a ribonucleoside 5'-triphosphate + ADP. Major role in the synthesis of nucleoside triphosphates other than ATP. The ATP gamma phosphate is transferred to the NDP beta phosphate via a ping-pong mechanism, using a phosphorylated active-site intermediate. The chain is Nucleoside diphosphate kinase from Methylobacterium nodulans (strain LMG 21967 / CNCM I-2342 / ORS 2060).